A 319-amino-acid polypeptide reads, in one-letter code: Formimidoylglutamase (319 aa).

Positions 127, 150, 152, 154, 242, and 244 each coordinate Mn(2+).

It belongs to the arginase family. Mn(2+) serves as cofactor.

The enzyme catalyses N-formimidoyl-L-glutamate + H2O = formamide + L-glutamate. It participates in amino-acid degradation; L-histidine degradation into L-glutamate; L-glutamate from N-formimidoyl-L-glutamate (hydrolase route): step 1/1. Its function is as follows. Catalyzes the conversion of N-formimidoyl-L-glutamate to L-glutamate and formamide. The chain is Formimidoylglutamase from Bacillus subtilis (strain 168).